The primary structure comprises 508 residues: 2,3-bisphosphoglycerate-independent phosphoglycerate mutase (508 aa).

Positions 14 and 64 each coordinate Mn(2+). The Phosphoserine intermediate role is filled by serine 64. Substrate-binding positions include histidine 125, 155 to 156 (RD), arginine 187, arginine 193, 259 to 262 (RADR), and lysine 332. Residues aspartate 399, histidine 403, aspartate 440, histidine 441, and histidine 459 each coordinate Mn(2+).

This sequence belongs to the BPG-independent phosphoglycerate mutase family. As to quaternary structure, monomer. It depends on Mn(2+) as a cofactor.

It catalyses the reaction (2R)-2-phosphoglycerate = (2R)-3-phosphoglycerate. The protein operates within carbohydrate degradation; glycolysis; pyruvate from D-glyceraldehyde 3-phosphate: step 3/5. Its function is as follows. Catalyzes the interconversion of 2-phosphoglycerate and 3-phosphoglycerate. This Pseudomonas fluorescens (strain Pf0-1) protein is 2,3-bisphosphoglycerate-independent phosphoglycerate mutase.